The chain runs to 544 residues: Epidermal growth factor-like protein 6 (544 aa).

The signal sequence occupies residues 1 to 30 (MAITGGMQSSDMVLLLWITVICACCSFVDS). The EGF-like 1 domain maps to 63–98 (RKGQCEAVCEQGCKHGECVGPNKCKCFPGFTGKNCN). 6 cysteine pairs are disulfide-bonded: Cys67/Cys80, Cys71/Cys86, Cys88/Cys97, Cys104/Cys115, Cys111/Cys124, and Cys126/Cys138. The EGF-like 2; calcium-binding domain maps to 100–139 (DLNECGLKPRPCEHRCMNTHGSYKCYCLNGYMLMPDGSCS). The EGF-like 3 domain maps to 144–178 (CAMANCQYGCEQVKGDIRCLCPSGGLQLGPDGRTC). The region spanning 180–218 (DIDECAVGKASCPINRRCVNTFGSYYCKCQIGYELKYVN) is the EGF-like 4; calcium-binding domain. 5 disulfides stabilise this stretch: Cys184/Cys197, Cys191/Cys206, Cys229/Cys242, Cys236/Cys251, and Cys253/Cys264. The EGF-like 5; calcium-binding domain maps to 225–265 (DINECLLNTHKCSINADCLNTQGSFKCRCKHGFKGNGQECS). The tract at residues 332 to 357 (GNDNDEEEGEIEEEEEEELDEEDEEN) is disordered. Residues 333 to 367 (NDNDEEEGEIEEEEEEELDEEDEENVIEEEKLLRG) adopt a coiled-coil conformation. The span at 334–357 (DNDEEEGEIEEEEEEELDEEDEEN) shows a compositional bias: acidic residues. The 145-residue stretch at 399–543 (VDCRFDQGTC…VFLSSGPCSD (145 aa)) folds into the MAM domain.

The protein belongs to the nephronectin family.

It localises to the secreted. It is found in the extracellular space. Its subcellular location is the extracellular matrix. The protein resides in the basement membrane. May play a role in organ morphogenesis. Promotes matrix assembly. This chain is Epidermal growth factor-like protein 6 (egfl6), found in Xenopus laevis (African clawed frog).